A 27-amino-acid chain; its full sequence is Alpha-benincasin (27 aa).

Functionally, has weak antifungal activity toward C.comatus and P.piricola but not toward M.arachidicola. Inhibits cell-free translation in rabbit reticulocyte lysate system. The polypeptide is Alpha-benincasin (Benincasa hispida (Wax gourd)).